The chain runs to 298 residues: Olfactory receptor 52Z1P (298 aa).

Over 1–14 (MGIPGLEGLHTWIS) the chain is Extracellular. A helical membrane pass occupies residues 15–35 (IPFSFMYIVAVAGNIFLIFLI). Topologically, residues 36–43 (MTERSLHE) are cytoplasmic. Residues 44-64 (PMYLFLSMLASADFLLATAAA) form a helical membrane-spanning segment. Residues 65 to 85 (PKVLAILWFHSMDISFGSCVS) are Extracellular-facing. C83 and C164 are oxidised to a cystine. The helical transmembrane segment at 86 to 106 (QMFFIHFIFVAESAILLAMAF) threads the bilayer. Over 107 to 128 (DRYVAICYPLRYTILTSSAVRK) the chain is Cytoplasmic. Residues 129–149 (IGIAAVVRSFFICCPFIFLVY) form a helical membrane-spanning segment. Residues 150 to 178 (RLTYCGRNIIPHSYCEHIARLACGNINVN) are Extracellular-facing. A helical membrane pass occupies residues 179 to 199 (IIYGLTVALLSTGLDIVLIII). At 200 to 223 (SYTMILHSVFQISSWAARFKALST) the chain is on the cytoplasmic side. Residues 224–244 (CGSHICVIFMFYTPAFFSFLA) form a helical membrane-spanning segment. Topologically, residues 245–257 (HRFGGKTIPHHIH) are extracellular. Residues 258–278 (ILVGSLYVLVPPMLNPIIYGV) traverse the membrane as a helical segment. The Cytoplasmic portion of the chain corresponds to 279–298 (KTKQIKDRVILLFSPISVCC).

Belongs to the G-protein coupled receptor 1 family.

The protein localises to the cell membrane. Its function is as follows. Odorant receptor. The protein is Olfactory receptor 52Z1P of Homo sapiens (Human).